The chain runs to 62 residues: Large ribosomal subunit protein eL24 (62 aa).

Residues Cys-7, Cys-10, Cys-33, and Cys-37 each coordinate Zn(2+). A C4-type zinc finger spans residues 7-37; sequence CSFCGREIEPGTGIMYVKNDGSILWFCSRKC.

This sequence belongs to the eukaryotic ribosomal protein eL24 family. In terms of assembly, part of the 50S ribosomal subunit. Forms a cluster with proteins L3 and L14. Zn(2+) serves as cofactor.

Its function is as follows. Binds to the 23S rRNA. This chain is Large ribosomal subunit protein eL24, found in Staphylothermus marinus (strain ATCC 43588 / DSM 3639 / JCM 9404 / F1).